A 274-amino-acid polypeptide reads, in one-letter code: Large ribosomal subunit protein uL2cz/uL2cy (274 aa).

The segment at Asn224–Lys274 is disordered.

The protein belongs to the universal ribosomal protein uL2 family. In terms of assembly, part of the 50S ribosomal subunit.

The protein localises to the plastid. It is found in the chloroplast. The chain is Large ribosomal subunit protein uL2cz/uL2cy (rpl2-A) from Morus indica (Mulberry).